The chain runs to 99 residues: Keratinocyte differentiation-associated protein (99 aa).

A signal peptide spans methionine 1–glycine 22.

As to expression, highly expressed in skin, but not detectable in any other tissue examined. Expression restricted to cornified/stratified epithelia and not detected in non-cornified/stratified epithelia.

The protein resides in the secreted. May act as a soluble regulator of keratinocyte differentiation. May play an important role in embryonic skin morphogenesis. This chain is Keratinocyte differentiation-associated protein, found in Canis lupus familiaris (Dog).